The primary structure comprises 454 residues: Retinoblastoma-binding protein homolog 5 (454 aa).

6 WD repeats span residues 23–64 (LQNA…RTFS), 65–104 (AHCL…LLHR), 153–192 (SSDE…CVAW), 196–235 (NTVQ…HQRG), 248–288 (VNKA…LIKI), and 292–330 (NKGE…NWSA).

As to quaternary structure, component of the SET2 complex (also known as the SET1/COMPASS complex), which contains at least set-2, swd-2.1, cfp-1, rbbp-5, wdr-5.1, dpy-30 and ash-2.

Its subcellular location is the nucleus. Its function is as follows. Required for di- and trimethylation at 'Lys-4' of histone H3. Regulates left/right asymmetry of ASE sensory neurons, via its role as a component of the SET2 complex. In Caenorhabditis elegans, this protein is Retinoblastoma-binding protein homolog 5 (rbbp-5).